Here is a 71-residue protein sequence, read N- to C-terminus: Serine palmitoyltransferase small subunit A (71 aa).

Over 1–12 the chain is Cytoplasmic; it reads MAGMALARAWKQ. Residues 13–29 form a helical membrane-spanning segment; the sequence is MSWFYYQYLLVTALYML. Residues 30 to 34 are Lumenal-facing; the sequence is EPWER. The helical transmembrane segment at 35–57 threads the bilayer; the sequence is TVFNSMLVSIVGMALYTGYVFMP. The Cytoplasmic segment spans residues 58–71; the sequence is QHIMAILHYFEIVQ.

This sequence belongs to the SPTSS family. SPTSSA subfamily. As to quaternary structure, component of the serine palmitoyltransferase (SPT) complex, which is composed of SPTLC1, SPTLC2 or SPTLC3 and SPTSSA or SPTSSB. The heterodimer consisting of SPTLC1 and SPTLC2/SPTLC3 forms the catalytic core of the enzyme, while SPTSSA or SPTSSB subunits determine substrate specificity. SPT also interacts with ORMDL proteins, especially ORMDL3, which negatively regulate SPT activity in the presence of ceramides. Interacts with MBOAT7; the interaction plays a role in MBOAT7 localization to mitochondria-associated membranes.

Its subcellular location is the endoplasmic reticulum membrane. It functions in the pathway lipid metabolism; sphingolipid metabolism. Component of the serine palmitoyltransferase multisubunit enzyme (SPT) that catalyzes the initial and rate-limiting step in sphingolipid biosynthesis by condensing L-serine and activated acyl-CoA (most commonly palmitoyl-CoA) to form long-chain bases. The SPT complex is composed of SPTLC1, SPTLC2 or SPTLC3 and SPTSSA or SPTSSB. Within this complex, the heterodimer consisting of SPTLC1 and SPTLC2/SPTLC3 forms the catalytic core. Within the SPT complex, SPTSSA stimulates the catalytic activity and plays a role in substrate specificity, which depends upon the overall complex composition. The SPTLC1-SPTLC2-SPTSSA complex shows a strong preference for C16-CoA substrate, while the SPTLC1-SPTLC3-SPTSSA isozyme uses both C14-CoA and C16-CoA as substrates, with a slight preference for C14-CoA. Independently of its action as a SPT component, may be involved in MBOAT7 localization to mitochondria-associated membranes, a membrane bridge between the endoplasmic reticulum and mitochondria, may hence affect MBOAT7-catalyzed incorporation of arachidonic acid into phosphatidylinositol. This chain is Serine palmitoyltransferase small subunit A, found in Homo sapiens (Human).